A 352-amino-acid polypeptide reads, in one-letter code: Protein-glutamate methylesterase/protein-glutamine glutaminase (352 aa).

Residues 4-121 (RVLIVDDSAT…YDGIDEIQKE (118 aa)) form the Response regulatory domain. Asp-55 bears the 4-aspartylphosphate mark. The 193-residue stretch at 159-351 (AQTTNKLIAI…VKIASLLSER (193 aa)) folds into the CheB-type methylesterase domain. Active-site residues include Ser-171, His-197, and Asp-293.

The protein belongs to the CheB family. Post-translationally, phosphorylated by CheA. Phosphorylation of the N-terminal regulatory domain activates the methylesterase activity.

The protein resides in the cytoplasm. It carries out the reaction [protein]-L-glutamate 5-O-methyl ester + H2O = L-glutamyl-[protein] + methanol + H(+). It catalyses the reaction L-glutaminyl-[protein] + H2O = L-glutamyl-[protein] + NH4(+). Involved in chemotaxis. Part of a chemotaxis signal transduction system that modulates chemotaxis in response to various stimuli. Catalyzes the demethylation of specific methylglutamate residues introduced into the chemoreceptors (methyl-accepting chemotaxis proteins or MCP) by CheR. Also mediates the irreversible deamidation of specific glutamine residues to glutamic acid. In Sulfurimonas denitrificans (strain ATCC 33889 / DSM 1251) (Thiomicrospira denitrificans (strain ATCC 33889 / DSM 1251)), this protein is Protein-glutamate methylesterase/protein-glutamine glutaminase.